The sequence spans 358 residues: Holliday junction branch migration complex subunit RuvB (358 aa).

Residues 1-24 (MAIKRSHNSPPATEENLLTPNPTI) form a disordered region. Positions 8-22 (NSPPATEENLLTPNP) are enriched in polar residues. The large ATPase domain (RuvB-L) stretch occupies residues 13–195 (TEENLLTPNP…FGLIQRLRFY (183 aa)). ATP contacts are provided by residues Ile34, Arg35, Gly76, Lys79, Thr80, Thr81, 142–144 (EDY), Arg185, Tyr195, and Arg232. Residue Thr80 coordinates Mg(2+). The small ATPAse domain (RuvB-S) stretch occupies residues 196–266 (AVEELTAIIL…LAAEGLNQLN (71 aa)). Residues 269 to 358 (SMGLDWTDRL…KDRSLPLFEF (90 aa)) are head domain (RuvB-H). DNA-binding residues include Arg324 and Arg329.

Belongs to the RuvB family. As to quaternary structure, homohexamer. Forms an RuvA(8)-RuvB(12)-Holliday junction (HJ) complex. HJ DNA is sandwiched between 2 RuvA tetramers; dsDNA enters through RuvA and exits via RuvB. An RuvB hexamer assembles on each DNA strand where it exits the tetramer. Each RuvB hexamer is contacted by two RuvA subunits (via domain III) on 2 adjacent RuvB subunits; this complex drives branch migration. In the full resolvosome a probable DNA-RuvA(4)-RuvB(12)-RuvC(2) complex forms which resolves the HJ.

The protein localises to the cytoplasm. It carries out the reaction ATP + H2O = ADP + phosphate + H(+). Its function is as follows. The RuvA-RuvB-RuvC complex processes Holliday junction (HJ) DNA during genetic recombination and DNA repair, while the RuvA-RuvB complex plays an important role in the rescue of blocked DNA replication forks via replication fork reversal (RFR). RuvA specifically binds to HJ cruciform DNA, conferring on it an open structure. The RuvB hexamer acts as an ATP-dependent pump, pulling dsDNA into and through the RuvAB complex. RuvB forms 2 homohexamers on either side of HJ DNA bound by 1 or 2 RuvA tetramers; 4 subunits per hexamer contact DNA at a time. Coordinated motions by a converter formed by DNA-disengaged RuvB subunits stimulates ATP hydrolysis and nucleotide exchange. Immobilization of the converter enables RuvB to convert the ATP-contained energy into a lever motion, pulling 2 nucleotides of DNA out of the RuvA tetramer per ATP hydrolyzed, thus driving DNA branch migration. The RuvB motors rotate together with the DNA substrate, which together with the progressing nucleotide cycle form the mechanistic basis for DNA recombination by continuous HJ branch migration. Branch migration allows RuvC to scan DNA until it finds its consensus sequence, where it cleaves and resolves cruciform DNA. The chain is Holliday junction branch migration complex subunit RuvB from Microcystis aeruginosa (strain NIES-843 / IAM M-2473).